The primary structure comprises 218 residues: GEM-like protein 6 (218 aa).

The GRAM domain occupies 96–174 (KIYKRLFKVC…CKINGVNQSQ (79 aa)).

It belongs to the GEM family.

This chain is GEM-like protein 6, found in Arabidopsis thaliana (Mouse-ear cress).